We begin with the raw amino-acid sequence, 364 residues long: 3-isopropylmalate dehydrogenase (364 aa).

78–89 (GPKWGTGAVRPE) provides a ligand contact to NAD(+). 4 residues coordinate substrate: R96, R106, R135, and D224. 3 residues coordinate Mg(2+): D224, D249, and D253. 288–299 (GSAPDLPANKVN) is a binding site for NAD(+).

This sequence belongs to the isocitrate and isopropylmalate dehydrogenases family. Homodimer. Mg(2+) is required as a cofactor. Requires Mn(2+) as cofactor.

The protein resides in the cytoplasm. The catalysed reaction is (2R,3S)-3-isopropylmalate + NAD(+) = 4-methyl-2-oxopentanoate + CO2 + NADH. Its pathway is amino-acid biosynthesis; L-leucine biosynthesis; L-leucine from 3-methyl-2-oxobutanoate: step 3/4. Catalyzes the oxidation of 3-carboxy-2-hydroxy-4-methylpentanoate (3-isopropylmalate) to 3-carboxy-4-methyl-2-oxopentanoate. The product decarboxylates to 4-methyl-2 oxopentanoate. This Wickerhamomyces anomalus (strain ATCC 8168 / CBS 5759 / DSM 6766 / JCM 3585 / IAM 12210 / NCYC 432 / NBRC 10213 / NRRL Y-366 / AJ 5027) (Yeast) protein is 3-isopropylmalate dehydrogenase (LEU2).